The following is a 381-amino-acid chain: Succinyl-diaminopimelate desuccinylase (381 aa).

His69 contacts Zn(2+). The active site involves Asp71. Zn(2+) is bound at residue Asp103. Catalysis depends on Glu137, which acts as the Proton acceptor. Zn(2+) is bound by residues Glu138, Glu166, and His355.

It belongs to the peptidase M20A family. DapE subfamily. Homodimer. Requires Zn(2+) as cofactor. Co(2+) is required as a cofactor.

The catalysed reaction is N-succinyl-(2S,6S)-2,6-diaminopimelate + H2O = (2S,6S)-2,6-diaminopimelate + succinate. It participates in amino-acid biosynthesis; L-lysine biosynthesis via DAP pathway; LL-2,6-diaminopimelate from (S)-tetrahydrodipicolinate (succinylase route): step 3/3. In terms of biological role, catalyzes the hydrolysis of N-succinyl-L,L-diaminopimelic acid (SDAP), forming succinate and LL-2,6-diaminopimelate (DAP), an intermediate involved in the bacterial biosynthesis of lysine and meso-diaminopimelic acid, an essential component of bacterial cell walls. The polypeptide is Succinyl-diaminopimelate desuccinylase (Rickettsia massiliae (strain Mtu5)).